The chain runs to 185 residues: Capsid protein (185 aa).

The disordered stretch occupies residues 135-185 (PNAPILSTLPETTVVRRRDRGRSPRRRTPSPRRRRSQSPRRRRSQSRESQC). The span at 149-178 (VRRRDRGRSPRRRTPSPRRRRSQSPRRRRS) shows a compositional bias: basic residues. 3 positions are modified to phosphoserine; by host: Ser-157, Ser-164, and Ser-172. The stretch at 157–163 (SPRRRTP) is one 1; half-length repeat. The tract at residues 157–179 (SPRRRTPSPRRRRSQSPRRRRSQ) is 3 X 8 AA repeats of S-P-R-R-R-[PR]-S-Q. A Bipartite nuclear localization signal motif is present at residues 160–177 (RRTPSPRRRRSQSPRRRR). 2 tandem repeats follow at residues 164 to 171 (SPRRRRSQ) and 172 to 179 (SPRRRRSQ). Residues 179 to 185 (QSRESQC) form an RNA binding region.

It belongs to the orthohepadnavirus core antigen family. In terms of assembly, homodimerizes, then multimerizes. Interacts with cytosol exposed regions of viral L glycoprotein present in the reticulum-to-Golgi compartment. Interacts with human FLNB. Phosphorylated form interacts with host importin alpha; this interaction depends on the exposure of the NLS, which itself depends upon genome maturation and/or phosphorylation of the capsid protein. Interacts with host NUP153. Phosphorylated by host SRPK1, SRPK2, and maybe protein kinase C or GAPDH. Phosphorylation is critical for pregenomic RNA packaging. Protein kinase C phosphorylation is stimulated by HBx protein and may play a role in transport of the viral genome to the nucleus at the late step during the viral replication cycle.

It localises to the virion. The protein localises to the host cytoplasm. Its function is as follows. Self assembles to form an icosahedral capsid. Most capsids appear to be large particles with an icosahedral symmetry of T=4 and consist of 240 copies of capsid protein, though a fraction forms smaller T=3 particles consisting of 180 capsid proteins. Entering capsids are transported along microtubules to the nucleus. Phosphorylation of the capsid is thought to induce exposure of nuclear localization signal in the C-terminal portion of the capsid protein that allows binding to the nuclear pore complex via the importin (karyopherin-) alpha and beta. Capsids are imported in intact form through the nuclear pore into the nuclear basket, where it probably binds NUP153. Only capsids that contain the mature viral genome can release the viral DNA and capsid protein into the nucleoplasm. Immature capsids get stuck in the basket. Capsids encapsulate the pre-genomic RNA and the P protein. Pre-genomic RNA is reverse-transcribed into DNA while the capsid is still in the cytoplasm. The capsid can then either be directed to the nucleus, providing more genomes for transcription, or bud through the endoplasmic reticulum to provide new virions. This chain is Capsid protein, found in Hepatitis B virus genotype A3 (isolate Cameroon/CMR711/1994) (HBV-A).